The sequence spans 788 residues: Diacylglycerol kinase gamma (788 aa).

Residues 83-93 (PRQETPDHPKE) show a composition bias toward basic and acidic residues. Positions 83–150 (PRQETPDHPK…WGEPNAPASS (68 aa)) are disordered. Polar residues predominate over residues 95–109 (ASSSEPNVSDSNAES). EF-hand domains follow at residues 172 to 207 (RPQD…MLHV) and 217 to 252 (ELRP…TIPL). Ca(2+) is bound by residues D185, D187, N189, E196, D230, N232, D234, and E241. 2 Phorbol-ester/DAG-type zinc fingers span residues 268 to 318 (RHAW…IPGC) and 333 to 380 (QHAW…STAC). The region spanning 427-561 (PGTHPLLVLV…LDRWYLEVMP (135 aa)) is the DAGKc domain. The segment at 768-788 (MMGPPQKSSFFSLRRKSRSKD) is disordered.

It belongs to the eukaryotic diacylglycerol kinase family. Expressed specifically in brain. Highly expressed in cerebellar Purkinje cells (at protein level).

Its subcellular location is the membrane. It is found in the cytoplasm. It localises to the cytosol. The protein resides in the cytoskeleton. The enzyme catalyses a 1,2-diacyl-sn-glycerol + ATP = a 1,2-diacyl-sn-glycero-3-phosphate + ADP + H(+). The catalysed reaction is 1,2-didecanoyl-sn-glycerol + ATP = 1,2-didecanoyl-sn-glycero-3-phosphate + ADP + H(+). It carries out the reaction 1,2-di-(9Z-octadecenoyl)-sn-glycerol + ATP = 1,2-di-(9Z-octadecenoyl)-sn-glycero-3-phosphate + ADP + H(+). It catalyses the reaction 1-octadecanoyl-2-(9Z,12Z)-octadecadienoyl-sn-glycerol + ATP = 1-octadecanoyl-2-(9Z,12Z-octadecadienoyl)-sn-glycero-3-phosphate + ADP + H(+). The enzyme catalyses 1-octadecanoyl-2-(5Z,8Z,11Z,14Z-eicosatetraenoyl)-sn-glycerol + ATP = 1-octadecanoyl-2-(5Z,8Z,11Z,14Z-eicosatetraenoyl)-sn-glycero-3-phosphate + ADP + H(+). It participates in lipid metabolism; glycerolipid metabolism. The activity is calcium-dependent. Requires phosphatidylserine for maximal activity. Functionally, diacylglycerol kinase that converts diacylglycerol/DAG into phosphatidic acid/phosphatidate/PA and regulates the respective levels of these two bioactive lipids. Thereby, acts as a central switch between the signaling pathways activated by these second messengers with different cellular targets and opposite effects in numerous biological processes. Has no apparent specificity with regard to the acyl compositions of diacylglycerol. Specifically expressed in the cerebellum where it controls the level of diacylglycerol which in turn regulates the activity of protein kinase C gamma. Through protein kinase C gamma, indirectly regulates the dendritic development of Purkinje cells, cerebellar long term depression and ultimately cerebellar motor coordination. The polypeptide is Diacylglycerol kinase gamma (Dgkg) (Rattus norvegicus (Rat)).